A 172-amino-acid polypeptide reads, in one-letter code: Probable metallophosphoesterase MTH_1774 (172 aa).

A divalent metal cation-binding residues include Asp-8, His-10, Asp-37, Asn-59, His-85, His-113, and His-115.

The protein belongs to the metallophosphoesterase superfamily. YfcE family. A divalent metal cation serves as cofactor.

This is Probable metallophosphoesterase MTH_1774 from Methanothermobacter thermautotrophicus (strain ATCC 29096 / DSM 1053 / JCM 10044 / NBRC 100330 / Delta H) (Methanobacterium thermoautotrophicum).